We begin with the raw amino-acid sequence, 155 residues long: Large ribosomal subunit protein uL13 (155 aa).

The protein belongs to the universal ribosomal protein uL13 family. Part of the 50S ribosomal subunit.

This protein is one of the early assembly proteins of the 50S ribosomal subunit, although it is not seen to bind rRNA by itself. It is important during the early stages of 50S assembly. This is Large ribosomal subunit protein uL13 from Rickettsia bellii (strain OSU 85-389).